The sequence spans 241 residues: DnaA regulatory inactivator Hda (241 aa).

It belongs to the DnaA family. HdA subfamily. The active form seems to be an ADP-bound monomer. Forms the RIDA complex (regulatory inactivation of DnaA) of ATP-DnaA, ADP-Hda and the DNA-loaded beta sliding clamp (dnaN).

Mediates the interaction of DNA replication initiator protein DnaA with DNA polymerase subunit beta sliding clamp (dnaN). Stimulates hydrolysis of ATP-DnaA to ADP-DnaA, rendering DnaA inactive for reinitiation, a process called regulatory inhibition of DnaA or RIDA. The sequence is that of DnaA regulatory inactivator Hda from Citrobacter koseri (strain ATCC BAA-895 / CDC 4225-83 / SGSC4696).